A 534-amino-acid chain; its full sequence is Glucans biosynthesis protein D (534 aa).

Positions 1–26 form a signal peptide, tat-type signal; sequence MQRRDFIRNASLALAAFGLPSLPACA.

It belongs to the OpgD/OpgG family. In terms of processing, predicted to be exported by the Tat system. The position of the signal peptide cleavage has not been experimentally proven.

It localises to the periplasm. It functions in the pathway glycan metabolism; osmoregulated periplasmic glucan (OPG) biosynthesis. Functionally, probably involved in the control of the structural glucose backbone of osmoregulated periplasmic glucans (OPGs). This chain is Glucans biosynthesis protein D, found in Stenotrophomonas maltophilia (strain R551-3).